We begin with the raw amino-acid sequence, 267 residues long: NAD(P)H-hydrate epimerase (267 aa).

Positions alanine 27 to leucine 242 constitute a YjeF N-terminal domain. Asparagine 78–aspartate 82 contacts (6S)-NADPHX. K(+)-binding residues include glutamine 79 and aspartate 142. (6S)-NADPHX-binding positions include glycine 146–aspartate 152 and aspartate 185. Serine 188 contributes to the K(+) binding site.

This sequence belongs to the NnrE/AIBP family. Requires K(+) as cofactor.

The protein resides in the cytoplasm. The protein localises to the mitochondrion. It catalyses the reaction (6R)-NADHX = (6S)-NADHX. The enzyme catalyses (6R)-NADPHX = (6S)-NADPHX. Functionally, catalyzes the epimerization of the S- and R-forms of NAD(P)HX, a damaged form of NAD(P)H that is a result of enzymatic or heat-dependent hydration. This is a prerequisite for the S-specific NAD(P)H-hydrate dehydratase to allow the repair of both epimers of NAD(P)HX. This Mycosarcoma maydis (Corn smut fungus) protein is NAD(P)H-hydrate epimerase.